A 763-amino-acid chain; its full sequence is uncharacterized protein (763 aa).

The TR mART core domain occupies 380–607 (DSVLNPFNTN…YNIKVITMRL (228 aa)). The chain crosses the membrane as a helical span at residues 684–700 (SYVSIYALLCPLLTNIY).

It localises to the membrane. This is an uncharacterized protein from Acanthamoeba polyphaga mimivirus (APMV).